The following is a 252-amino-acid chain: 2-succinyl-6-hydroxy-2,4-cyclohexadiene-1-carboxylate synthase (252 aa).

Belongs to the AB hydrolase superfamily. MenH family. Monomer.

It catalyses the reaction 5-enolpyruvoyl-6-hydroxy-2-succinyl-cyclohex-3-ene-1-carboxylate = (1R,6R)-6-hydroxy-2-succinyl-cyclohexa-2,4-diene-1-carboxylate + pyruvate. Its pathway is quinol/quinone metabolism; 1,4-dihydroxy-2-naphthoate biosynthesis; 1,4-dihydroxy-2-naphthoate from chorismate: step 3/7. It functions in the pathway quinol/quinone metabolism; menaquinone biosynthesis. In terms of biological role, catalyzes a proton abstraction reaction that results in 2,5-elimination of pyruvate from 2-succinyl-5-enolpyruvyl-6-hydroxy-3-cyclohexene-1-carboxylate (SEPHCHC) and the formation of 2-succinyl-6-hydroxy-2,4-cyclohexadiene-1-carboxylate (SHCHC). The chain is 2-succinyl-6-hydroxy-2,4-cyclohexadiene-1-carboxylate synthase from Salmonella paratyphi A (strain ATCC 9150 / SARB42).